The sequence spans 240 residues: tRNA (guanine-N(1)-)-methyltransferase (240 aa).

S-adenosyl-L-methionine-binding positions include Gly110 and 129 to 134; that span reads LGDFVL.

It belongs to the RNA methyltransferase TrmD family. As to quaternary structure, homodimer.

The protein localises to the cytoplasm. It carries out the reaction guanosine(37) in tRNA + S-adenosyl-L-methionine = N(1)-methylguanosine(37) in tRNA + S-adenosyl-L-homocysteine + H(+). Its function is as follows. Specifically methylates guanosine-37 in various tRNAs. In Clostridium botulinum (strain ATCC 19397 / Type A), this protein is tRNA (guanine-N(1)-)-methyltransferase.